Reading from the N-terminus, the 122-residue chain is Aspartate 1-decarboxylase (122 aa).

The active-site Schiff-base intermediate with substrate; via pyruvic acid is the Ser25. Residue Ser25 is modified to Pyruvic acid (Ser). A substrate-binding site is contributed by Thr57. Tyr58 acts as the Proton donor in catalysis. 73-75 lines the substrate pocket; sequence GAA.

Belongs to the PanD family. As to quaternary structure, heterooctamer of four alpha and four beta subunits. Pyruvate serves as cofactor. In terms of processing, is synthesized initially as an inactive proenzyme, which is activated by self-cleavage at a specific serine bond to produce a beta-subunit with a hydroxyl group at its C-terminus and an alpha-subunit with a pyruvoyl group at its N-terminus.

Its subcellular location is the cytoplasm. The catalysed reaction is L-aspartate + H(+) = beta-alanine + CO2. Its pathway is cofactor biosynthesis; (R)-pantothenate biosynthesis; beta-alanine from L-aspartate: step 1/1. Its function is as follows. Catalyzes the pyruvoyl-dependent decarboxylation of aspartate to produce beta-alanine. The polypeptide is Aspartate 1-decarboxylase (Bordetella parapertussis (strain 12822 / ATCC BAA-587 / NCTC 13253)).